A 228-amino-acid polypeptide reads, in one-letter code: Ribonuclease 3 (228 aa).

The region spanning I3–G132 is the RNase III domain. A Mg(2+)-binding site is contributed by E45. The active site involves D49. Mg(2+) is bound by residues D118 and E121. Residue E121 is part of the active site. Residues D158–N227 form the DRBM domain. The interval G205–S228 is disordered.

Belongs to the ribonuclease III family. As to quaternary structure, homodimer. The cofactor is Mg(2+).

It is found in the cytoplasm. It carries out the reaction Endonucleolytic cleavage to 5'-phosphomonoester.. Its function is as follows. Digests double-stranded RNA. Involved in the processing of primary rRNA transcript to yield the immediate precursors to the large and small rRNAs (23S and 16S). Processes some mRNAs, and tRNAs when they are encoded in the rRNA operon. Processes pre-crRNA and tracrRNA of type II CRISPR loci if present in the organism. This chain is Ribonuclease 3, found in Oceanobacillus iheyensis (strain DSM 14371 / CIP 107618 / JCM 11309 / KCTC 3954 / HTE831).